Reading from the N-terminus, the 315-residue chain is HPr kinase/phosphorylase (315 aa).

Catalysis depends on residues His140 and Lys161. 155 to 162 is an ATP binding site; sequence GDSGVGKS. Position 162 (Ser162) interacts with Mg(2+). Asp179 serves as the catalytic Proton acceptor; for phosphorylation activity. Proton donor; for dephosphorylation activity. Residues 203–212 are important for the catalytic mechanism of both phosphorylation and dephosphorylation; that stretch reads LEIRGIGIID. Glu204 is a Mg(2+) binding site. Residue Arg245 is part of the active site. Positions 266 to 271 are important for the catalytic mechanism of dephosphorylation; that stretch reads PVKTGR.

The protein belongs to the HPrK/P family. Homohexamer. The cofactor is Mg(2+).

The catalysed reaction is [HPr protein]-L-serine + ATP = [HPr protein]-O-phospho-L-serine + ADP + H(+). The enzyme catalyses [HPr protein]-O-phospho-L-serine + phosphate + H(+) = [HPr protein]-L-serine + diphosphate. Catalyzes the ATP- as well as the pyrophosphate-dependent phosphorylation of a specific serine residue in HPr, a phosphocarrier protein of the phosphoenolpyruvate-dependent sugar phosphotransferase system (PTS). HprK/P also catalyzes the pyrophosphate-producing, inorganic phosphate-dependent dephosphorylation (phosphorolysis) of seryl-phosphorylated HPr (P-Ser-HPr). The two antagonistic activities of HprK/P are regulated by several intracellular metabolites, which change their concentration in response to the absence or presence of rapidly metabolisable carbon sources (glucose, fructose, etc.) in the growth medium. Therefore, by controlling the phosphorylation state of HPr, HPrK/P is a sensor enzyme that plays a major role in the regulation of carbon metabolism and sugar transport: it mediates carbon catabolite repression (CCR), and regulates PTS-catalyzed carbohydrate uptake and inducer exclusion. The sequence is that of HPr kinase/phosphorylase from Lactiplantibacillus plantarum (strain ATCC BAA-793 / NCIMB 8826 / WCFS1) (Lactobacillus plantarum).